The following is an 884-amino-acid chain: Exocyst complex component 2 (884 aa).

Over residues 1 to 11 the composition is skewed to basic and acidic residues; the sequence is MEENAQARERL. The tract at residues 1 to 27 is disordered; it reads MEENAQARERLPPTVTGLSPTEGVPGT. Residues 13–98 enclose the IPT/TIG domain; the sequence is PTVTGLSPTE…GSSNVKFRVF (86 aa). Coiled coils occupy residues 178 to 206 and 846 to 874; these read ADATIEDLRIAIKNMELSKQNEAKRSEEM and NQRLQQCLKNMRTTMRMALQSLEQHAENL.

It belongs to the SEC5 family. As to quaternary structure, the exocyst complex is composed of sec-3/exoc1, sec-5/exoc2, sec-6/exoc3, sec-8/exoc4, sec-10/exoc5, sec-15/exoc6, exo-70/exoc7 and exo-84/exoc8.

In terms of biological role, component of the exocyst complex involved in the docking of exocytic vesicles with fusion sites on the plasma membrane. The sequence is that of Exocyst complex component 2 (sec-5) from Caenorhabditis elegans.